A 339-amino-acid polypeptide reads, in one-letter code: uncharacterized protein (339 aa).

The first 29 residues, M1 to A29, serve as a signal peptide directing secretion.

Belongs to the aerolysin family.

This is an uncharacterized protein from Staphylococcus aureus (strain MRSA252).